Reading from the N-terminus, the 437-residue chain is Type II methyltransferase M.HgiBI (437 aa).

Positions 4–431 (FRFIDLFAGI…KALQCVKLFE (428 aa)) constitute an SAM-dependent MTase C5-type domain. Residue cysteine 75 is part of the active site.

The protein belongs to the class I-like SAM-binding methyltransferase superfamily. C5-methyltransferase family.

The enzyme catalyses a 2'-deoxycytidine in DNA + S-adenosyl-L-methionine = a 5-methyl-2'-deoxycytidine in DNA + S-adenosyl-L-homocysteine + H(+). In terms of biological role, a methylase that recognizes the double-stranded sequence 5'-GGWCC-3', methylates C-? on both strands, and protects the DNA from cleavage by the HgiBI endonuclease. This system is less active than isoschizomeric RM.HgiEI. This chain is Type II methyltransferase M.HgiBI, found in Herpetosiphon aurantiacus (Herpetosiphon giganteus).